Reading from the N-terminus, the 256-residue chain is Dioxygenase lolE1 (256 aa).

3 residues coordinate Fe cation: H125, D127, and H203.

Belongs to the PhyH family. In terms of assembly, homodimer. The cofactor is Fe cation.

Its pathway is alkaloid biosynthesis. Its function is as follows. Dioxygenase; part of the gene cluster that mediates the biosynthesis of loline alkaloids, potent insecticidal agents composed of a pyrrolizidine ring system and an uncommon ether bridge linking carbons 2 and 7. Lolines are structurally differentiated by the various modifications of the L-amino group and include norloline, loline, N-methylloline, N-acetylloline, N-acetylnorloline, and N-formylloline. The first committed step is the condensation of O-acetyl-L-homoserine (derived from L-aspartic acid) and L-proline, probably catalyzed by the gamma-type pyridoxal 5'-phosphate(PLP)-dependent enzyme lolC, to give the diamino diacid, NACPP. Ensuing cyclization, decarboxylation, and acetylation steps yield 1-exo-acetamidopyrrolizidine (AcAP). LolO is required for installation of the ether bridge upon the pathway intermediate, 1-exo-acetamidopyrrolizidine (AcAP). In sequential 2-oxoglutarate- and O(2)-consuming steps, lolO removes hydrogens from C2 and C7 of AcAP to form both carbon-oxygen bonds in N-acetylnorloline (NANL), the precursor to all other lolines. The enzymes lolD, lolE, lolF and lolT have also been proposed to be involved in the ether-bridge installation. Further processing of the exocyclic moiety of NANL by fungal N-acetamidase (LolN), methyltransferase (LolM), and cytochrome P450 (LolP) enzymes, with occasional involvement of a plant acetyltransferase, generates the other known lolines. LolN transforms NANL to norlonine which is monomethylated and dimethylated to respectively lonine and N-methyllonine (NML) by lolM. LolP catalyzes hydroxylation of the methyl group in N-methylloline (NML) and further oxygenation to N-formylloline (NFL). A plant acetyltransferase is responsible for the acetylation of loline to form N-acetylloline (NAL). LolA might interact with aspartate kinase to prevent feedback inhibition of its activity by these end products and thereby promote production of L-homoserine from L-aspartate. The protein is Dioxygenase lolE1 of Epichloe uncinata (Endophyte fungus).